The sequence spans 417 residues: Tyrosine--tRNA ligase (417 aa).

Tyr39 provides a ligand contact to L-tyrosine. The 'HIGH' region signature appears at 44-53 (PTAPSLHAGG). Positions 176 and 180 each coordinate L-tyrosine. Positions 236-240 (KMGKS) match the 'KMSKS' region motif. Residue Lys239 coordinates ATP. Positions 350 to 417 (IGVLALMVLA…KKRHVLIRPA (68 aa)) constitute an S4 RNA-binding domain.

This sequence belongs to the class-I aminoacyl-tRNA synthetase family. TyrS type 1 subfamily. As to quaternary structure, homodimer.

It localises to the cytoplasm. The enzyme catalyses tRNA(Tyr) + L-tyrosine + ATP = L-tyrosyl-tRNA(Tyr) + AMP + diphosphate + H(+). Catalyzes the attachment of tyrosine to tRNA(Tyr) in a two-step reaction: tyrosine is first activated by ATP to form Tyr-AMP and then transferred to the acceptor end of tRNA(Tyr). In Brucella abortus (strain 2308), this protein is Tyrosine--tRNA ligase.